A 53-amino-acid polypeptide reads, in one-letter code: Light-harvesting protein B-800/850 alpha chain (53 aa).

Residues Met-1 to Val-14 are Cytoplasmic-facing. The chain crosses the membrane as a helical span at residues Gly-15–Leu-35. His-31 is a binding site for a bacteriochlorophyll. The Periplasmic segment spans residues Ser-36–Ala-53.

The protein belongs to the antenna complex alpha subunit family. As to quaternary structure, the core complex is formed by different alpha and beta chains, binding bacteriochlorophyll molecules, and arranged most probably in tetrameric structures disposed around the reaction center. The non-pigmented gamma chains may constitute additional components.

The protein resides in the cell inner membrane. Antenna complexes are light-harvesting systems, which transfer the excitation energy to the reaction centers. The protein is Light-harvesting protein B-800/850 alpha chain of Rhodoblastus acidophilus (Rhodopseudomonas acidophila).